Reading from the N-terminus, the 78-residue chain is MEKKVFVVEGYAKKGSLKFRFKKYFIALKKEDAIFYTYSILGSNHKLKKTQIHIERVYELDPEKDKDKLPDKRLLAFF.

The protein belongs to the eukaryotic ribosomal protein eL20 family. Part of the 50S ribosomal subunit. Binds 23S rRNA.

The protein is Large ribosomal subunit protein eL20 of Nanoarchaeum equitans (strain Kin4-M).